Here is a 454-residue protein sequence, read N- to C-terminus: LETM1 domain-containing protein YLH47, mitochondrial (454 aa).

The transit peptide at 1–45 directs the protein to the mitochondrion; that stretch reads MLKYRSLPIKRAIHHPAPGITPISPRIMVSRLRVIPSFNLKFNRW. Residues 46-136 lie on the Mitochondrial intermembrane side of the membrane; the sequence is NSSVPESSKK…LKRTTQDIVR (91 aa). The tract at residues 51 to 73 is disordered; sequence ESSKKELKTTDGNQESASKVSPV. Residues 137–157 form a helical membrane-spanning segment; it reads LVPFAAFLIIPFAELLLPFAL. Residues 158–454 lie on the Mitochondrial matrix side of the membrane; that stretch reads KLFPNLLPST…IGEAAAIKEK (297 aa). The region spanning 177-371 is the Letm1 RBD domain; that stretch reads KLENLRNTRK…LCDVLIGIPD (195 aa). Positions 376–423 form a coiled coil; sequence EVKVNVVKEDEASAKQKLKQLREQEEIMKEEEQQEENAIVSVKDELSL. Composition is skewed to basic and acidic residues over residues 420 to 430 and 437 to 454; these read ELSLDDQDKNI and VKPHDTKPIGEAAAIKEK. The tract at residues 420–454 is disordered; that stretch reads ELSLDDQDKNIDAAAPDVKPHDTKPIGEAAAIKEK.

In terms of assembly, associates with the mitochondrial ribosomes.

It is found in the mitochondrion inner membrane. Involved in mitochondrial potassium homeostasis through the mitochondrial K(+)/H(+) exchange regulation. This Saccharomyces cerevisiae (strain ATCC 204508 / S288c) (Baker's yeast) protein is LETM1 domain-containing protein YLH47, mitochondrial (YLH47).